Here is a 267-residue protein sequence, read N- to C-terminus: Sulfur carrier protein FdhD (267 aa).

Cys-108 functions as the Cysteine persulfide intermediate in the catalytic mechanism.

It belongs to the FdhD family.

It is found in the cytoplasm. Its function is as follows. Required for formate dehydrogenase (FDH) activity. Acts as a sulfur carrier protein that transfers sulfur from IscS to the molybdenum cofactor prior to its insertion into FDH. This is Sulfur carrier protein FdhD from Shouchella clausii (strain KSM-K16) (Alkalihalobacillus clausii).